The primary structure comprises 310 residues: MSQQLKKRAKTRHQKGLGGRAPSGAKPRQGKSSQDLQAEIEPVSAVWALCDGYVCYEPGPQALGGDDFSDCYIECVIRGEFSQPILEEDSLFESLEYLKKGSEQQLSQKVFEASSLECSLEYMKKGVKKELPQKIVGENSLEYSEYMTGKKLPPGGIPGIDLSDPKQLAEFARKKPPINKEYDSLSAIACPQSGCTRKLRNRAALRKHLLIHGPRDHVCAECGKAFVESSKLKRHFLVHTGEKPFRCTFEGCGKRFSLDFNLRTHVRIHTGEKRFVCPFQGCNRRFIQSNNLKAHILTHANTNKNEQEGK.

Residues 1–15 (MSQQLKKRAKTRHQK) are compositionally biased toward basic residues. The tract at residues 1–35 (MSQQLKKRAKTRHQKGLGGRAPSGAKPRQGKSSQD) is disordered. C2H2-type zinc fingers lie at residues 188–212 (IACP…LLIH), 217–239 (HVCA…FLVH), 245–269 (FRCT…VRIH), and 275–299 (FVCP…ILTH). Residues lysine 231 and lysine 233 each participate in a glycyl lysine isopeptide (Lys-Gly) (interchain with G-Cter in ubiquitin) cross-link.

The protein belongs to the krueppel C2H2-type zinc-finger protein family. In terms of processing, polyubiquitinated by RNF12, leading to proteasomal degradation. Expressed in kidney, epidermal keratinocytes, prostate epithelial cells, bronchial and small airway lung epithelial cells (at protein level). Expressed in malignant kidney and several carcinoma cell lines (at protein level). Expressed in embryonic stem cells, kidney, epidermal keratinocytes, prostate epithelial cells, bronchial and small airway lung epithelial cells. Expressed in embryonal carcinomas, seminomas, malignant kidney and several carcinoma cell lines.

It is found in the nucleus. In terms of biological role, involved in the reprogramming of X-chromosome inactivation during the acquisition of pluripotency. Required for efficient elongation of TSIX, a non-coding RNA antisense to XIST. Binds DXPas34 enhancer within the TSIX promoter. Involved in ES cell self-renewal. The sequence is that of Zinc finger protein 42 homolog (ZFP42) from Homo sapiens (Human).